A 304-amino-acid polypeptide reads, in one-letter code: 2-oxoacid:ferredoxin oxidoreductase 2, subunit beta (304 aa).

[4Fe-4S] cluster contacts are provided by cysteine 12, cysteine 15, and cysteine 46. Residues 44–47 (IGCS) and histidine 65 each bind thiamine diphosphate. Mg(2+) is bound at residue aspartate 90. 91-92 (GD) contributes to the thiamine diphosphate binding site. Asparagine 118 and valine 120 together coordinate Mg(2+). A thiamine diphosphate-binding site is contributed by 122-123 (GL). A [4Fe-4S] cluster-binding site is contributed by cysteine 197.

In terms of assembly, heterodimer composed of an alpha and a beta subunit. The cofactor is [4Fe-4S] cluster. It depends on thiamine diphosphate as a cofactor. Requires Mg(2+) as cofactor.

It carries out the reaction a 2-oxocarboxylate + 2 oxidized [2Fe-2S]-[ferredoxin] + CoA = an acyl-CoA + 2 reduced [2Fe-2S]-[ferredoxin] + CO2 + H(+). Its function is as follows. Catalyzes the coenzyme A-dependent oxidative decarboxylation of different 2-oxoacids such as 2-oxoglutarate, pyruvate and 2-oxobutyrate to form their CoA derivatives. The chain is 2-oxoacid:ferredoxin oxidoreductase 2, subunit beta from Sulfurisphaera tokodaii (strain DSM 16993 / JCM 10545 / NBRC 100140 / 7) (Sulfolobus tokodaii).